The sequence spans 310 residues: Lipoyl synthase (310 aa).

Positions 45, 50, 56, 71, 75, 78, and 285 each coordinate [4Fe-4S] cluster. The Radical SAM core domain maps to tryptophan 57–leucine 274.

Belongs to the radical SAM superfamily. Lipoyl synthase family. Requires [4Fe-4S] cluster as cofactor.

The protein localises to the cytoplasm. It carries out the reaction [[Fe-S] cluster scaffold protein carrying a second [4Fe-4S](2+) cluster] + N(6)-octanoyl-L-lysyl-[protein] + 2 oxidized [2Fe-2S]-[ferredoxin] + 2 S-adenosyl-L-methionine + 4 H(+) = [[Fe-S] cluster scaffold protein] + N(6)-[(R)-dihydrolipoyl]-L-lysyl-[protein] + 4 Fe(3+) + 2 hydrogen sulfide + 2 5'-deoxyadenosine + 2 L-methionine + 2 reduced [2Fe-2S]-[ferredoxin]. It functions in the pathway protein modification; protein lipoylation via endogenous pathway; protein N(6)-(lipoyl)lysine from octanoyl-[acyl-carrier-protein]: step 2/2. Its function is as follows. Catalyzes the radical-mediated insertion of two sulfur atoms into the C-6 and C-8 positions of the octanoyl moiety bound to the lipoyl domains of lipoate-dependent enzymes, thereby converting the octanoylated domains into lipoylated derivatives. In Novosphingobium aromaticivorans (strain ATCC 700278 / DSM 12444 / CCUG 56034 / CIP 105152 / NBRC 16084 / F199), this protein is Lipoyl synthase.